Reading from the N-terminus, the 205-residue chain is Beta-crystallin B2 (205 aa).

At A2 the chain carries N-acetylalanine. An N-terminal arm region spans residues 2-16 (ASDHQTQAGKPQPLN). Beta/gamma crystallin 'Greek key' domains are found at residues 17-56 (PKII…LVQA) and 57-101 (GPWV…RPIK). Residues 102–106 (VDSQE) form a connecting peptide region. 2 Beta/gamma crystallin 'Greek key' domains span residues 107–148 (HKII…RVQS) and 149–191 (GTWV…RRIR). The interval 193-205 (MQWHQRGAFHPSN) is C-terminal arm.

Belongs to the beta/gamma-crystallin family. As to quaternary structure, homo/heterodimer, or complexes of higher-order. The structure of beta-crystallin oligomers seems to be stabilized through interactions between the N-terminal arms.

In terms of biological role, crystallins are the dominant structural components of the vertebrate eye lens. This chain is Beta-crystallin B2 (CRYBB2), found in Canis lupus familiaris (Dog).